The sequence spans 971 residues: Exportin-2 (971 aa).

The Importin N-terminal domain occupies 29 to 102; the sequence is AEKFLESVEG…KANIVNLMLS (74 aa).

The protein belongs to the XPO2/CSE1 family. As to quaternary structure, interacts with cftr.

It localises to the cytoplasm. Its subcellular location is the nucleus. Functionally, export receptor for importin alpha. Mediates importin-alpha re-export from the nucleus to the cytoplasm after import substrates have been released into the nucleoplasm. Negatively regulates fluid secretion and plays a role in fluid homeostasis by down-regulating cftr activity. The sequence is that of Exportin-2 (cse1l) from Oreochromis niloticus (Nile tilapia).